The primary structure comprises 305 residues: MPSKKETLTVIVIMALFLLLTAACIGLRSEHLLMAALYLVLFFAGLPTRKLAVALLPFAIFGISYDWMRICPNYEVNPIDVAGLYNLEKSLFGVMDNGVLVTPCEYFAVHHWAVADVFAGIFYLCWVPVPILFGLCLYFKKERKTYLRFALVFLFVNLIGFAGYYIHPAAPPWYAINYGFEPILNTPGNVAGLGRFDEIFGVTIFDSIYGRNANVFAAVPSLHAAYMVVALVYAIIGKCRWYVIALFSVIMAGIWGTAIYSCHHYIIDVLLGISCALLGWLFFEYGLMKIRGFRNFFDRYYQYIK.

The first 23 residues, 1–23 (MPSKKETLTVIVIMALFLLLTAA), serve as a signal peptide directing secretion. A lipid anchor (N-palmitoyl cysteine) is attached at cysteine 24. The S-diacylglycerol cysteine moiety is linked to residue cysteine 24. A run of 6 helical transmembrane segments spans residues 41–61 (LFFA…FAIF), 117–137 (VFAG…GLCL), 149–169 (FALV…IHPA), 216–236 (FAAV…YAII), 241–261 (WYVI…AIYS), and 266–286 (IIDV…FEYG).

The protein resides in the membrane. It carries out the reaction N-(2-hydroxy-fatty acyl)-dihydroceramide + a 1,2-diacyl-sn-glycero-3-phospho-(1D-myo-inositol) = inositol-1-phospho-N-(2-hydroxy-fatty acyl)-dihydroceramide + a 1,2-diacyl-sn-glycerol. Functionally, catalyzes the addition of a phosphorylinositol group onto dihydroceramide to form phosphoinositol dihydroceramide (PI-DHC), an essential step in sphingolipid biosynthesis. This Bacteroides thetaiotaomicron (strain ATCC 29148 / DSM 2079 / JCM 5827 / CCUG 10774 / NCTC 10582 / VPI-5482 / E50) protein is Phosphoinositol dihydroceramide synthase.